A 352-amino-acid polypeptide reads, in one-letter code: Quinolinate synthase (352 aa).

Iminosuccinate-binding residues include His48 and Ser69. Residue Cys114 participates in [4Fe-4S] cluster binding. Iminosuccinate contacts are provided by residues 140–142 (YAN) and Ser157. Cys201 lines the [4Fe-4S] cluster pocket. Iminosuccinate is bound by residues 227-229 (HPE) and Thr244. Residue Cys298 coordinates [4Fe-4S] cluster.

Belongs to the quinolinate synthase family. Type 1 subfamily. The cofactor is [4Fe-4S] cluster.

The protein localises to the cytoplasm. The catalysed reaction is iminosuccinate + dihydroxyacetone phosphate = quinolinate + phosphate + 2 H2O + H(+). It functions in the pathway cofactor biosynthesis; NAD(+) biosynthesis; quinolinate from iminoaspartate: step 1/1. Catalyzes the condensation of iminoaspartate with dihydroxyacetone phosphate to form quinolinate. This is Quinolinate synthase from Pseudomonas putida (strain GB-1).